Consider the following 196-residue polypeptide: Nucleoside triphosphate pyrophosphatase (196 aa).

D72 acts as the Proton acceptor in catalysis.

This sequence belongs to the Maf family. The cofactor is a divalent metal cation.

The protein localises to the cytoplasm. It carries out the reaction a ribonucleoside 5'-triphosphate + H2O = a ribonucleoside 5'-phosphate + diphosphate + H(+). The enzyme catalyses a 2'-deoxyribonucleoside 5'-triphosphate + H2O = a 2'-deoxyribonucleoside 5'-phosphate + diphosphate + H(+). Functionally, nucleoside triphosphate pyrophosphatase. May have a dual role in cell division arrest and in preventing the incorporation of modified nucleotides into cellular nucleic acids. This Chlamydia muridarum (strain MoPn / Nigg) protein is Nucleoside triphosphate pyrophosphatase.